The sequence spans 370 residues: uncharacterized protein (370 aa).

Transmembrane regions (helical) follow at residues 6–26, 49–69, 79–99, 111–131, 143–163, 167–187, 206–226, 236–256, 307–327, and 333–353; these read AVVF…CLGN, IGIV…VAPF, SFAN…GEMA, FLGT…LGII, ILIG…CAGF, MIGK…FGLW, MVAI…IVLI, IQTT…TAFI, VAFA…VAGM, and AAMI…AAWM.

This sequence belongs to the EutH family.

It is found in the cell membrane. This is an uncharacterized protein from Bacillus subtilis (strain 168).